We begin with the raw amino-acid sequence, 358 residues long: Protein phosphatase 1 regulatory subunit 3G (358 aa).

The disordered stretch occupies residues 1-71; the sequence is MEPIGARLSL…KEEAAPQEQE (71 aa). Residues 11–29 are compositionally biased toward low complexity; the sequence is EAPGPAPFREAPPAEELPA. Serine 86 is subject to Phosphoserine. The 141-residue stretch at 210–350 folds into the CBM21 domain; that stretch reads AERLQRQRVC…NNAGANYTLR (141 aa). Positions 270-280 are enriched in low complexity; it reads EPLEPQQPEAP. The segment at 270–295 is disordered; that stretch reads EPLEPQQPEAPSGASEPGSGDAKKEP.

In terms of biological role, glycogen-targeting subunit for protein phosphatase 1 (PP1). Involved in the regulation of hepatic glycogenesis in a manner coupled to the fasting-feeding cycle and distinct from other glycogen-targeting subunits. The chain is Protein phosphatase 1 regulatory subunit 3G (PPP1R3G) from Homo sapiens (Human).